Here is a 349-residue protein sequence, read N- to C-terminus: MRKRISAIIMTLFMVLVSCNSGGVAEDPQSKFLKSVIDLGNDFLNVFTSFGDIVSKVLGFSTETKKSDVGAYFKTIQDTIQGTKDKLNKIVTDMKREGNPNASATETAVKTLIDNTLDKIIEGAKTVSDAIGDASDPIANVAAQNAAGAAGTEVDKLVKGIKTIVDVVLKGVGSANAGDDKKAEDGNTARTAAAGDGEAGKLFTAGAGAAGDANNAKKVAADAAKAVGAVTGADILQAMIKDNGDAAKLATAQNAGAAPKDGAIAGGIALRVMAKGGKFAGPSAAADDAVTAIKGAAISAITKALDTLTIAIRKTIDAGLKTVKEAMKINANDTPISPEQNTPKATTNN.

The signal sequence occupies residues 1-18 (MRKRISAIIMTLFMVLVS). A lipid anchor (N-palmitoyl cysteine) is attached at C19. C19 carries S-diacylglycerol cysteine lipidation.

Belongs to the variable large protein (Vlp) family. Gamma subfamily.

The protein resides in the cell outer membrane. Functionally, the Vlp and Vsp proteins are antigenically distinct proteins, only one vlp or vsp gene is transcriptionally active at any one time. Switching between these genes is a mechanism of host immune response evasion. The sequence is that of Variable large protein 19 from Borrelia hermsii.